Reading from the N-terminus, the 149-residue chain is Immunoglobulin kappa chain variable 6-17 (149 aa).

A signal peptide spans 1–29 (MHHTSMGIKMESQIQVFVFVFLWLSGVDG). Repeats lie at residues 26 to 35 (GVDGDIVMTQ) and 38 to 47 (GVDGDIVMTQ). Residues 42-64 (DIVMTQSHKFMSTSVGDRVSITC) are framework-1. A complementarity-determining-1 region spans residues 65 to 75 (KASQDVSTTVA). The tract at residues 76-90 (WYQQKPGQSPKLLIY) is framework-2. The segment at 91-97 (SASYRYT) is complementarity-determining-2. The segment at 98–129 (GVPDRFTGSGSGTDFTFTISSVQAEDLAVYYC) is framework-3. The complementarity-determining-3 stretch occupies residues 130–138 (QQHYSTPPT). The framework-4 stretch occupies residues 139 to 148 (FGGGTKLEIK).

This is Immunoglobulin kappa chain variable 6-17 from Mus musculus (Mouse).